The primary structure comprises 443 residues: MSWIDELSKIVEVFPPSDAYRFDETPPLVAPRAAENFVVVKPSNSEEVSAILKFANEKSIPVFMRGGGTGLSGGAVPTEEGIVLSTEKMTELEVDADNRVAICGAGVTLKQLDDAAFRHGLSFPPHPGAETATVGGMIATNAGGVRALKYGTMRNYVLSLEAVLADGRIINVGGKTIKNSSGYSLLHLLVGSEGTLAVITKATIRLFPQMRDMTVLAIPFPTMEDAMNCVVEVARKMLPMALEFMEKRAVEIGEKVSGERWVSREGEAHLLMVFESFDEAEEAAKIAQSLGAIDVYAATTKKDQDRLLKVRGMIYEGLRKEVIEVLDACVPPAKIAEYWRRSNELAEEYGIELITYGHAGDGNVHQHPLVYEGWEKSYFEFRKSLLSLAVSLGGVISGEHGIGAVKLSELEELFPEQFELMRQIKLLFDPKNILNPGKVVRKL.

Over 1-182 (MSWIDELSKI…GGKTIKNSSG (182 aa)) the chain is Extracellular. One can recognise an FAD-binding PCMH-type domain in the interval 32–209 (RAAENFVVVK…TKATIRLFPQ (178 aa)). Residues 183-203 (YSLLHLLVGSEGTLAVITKAT) traverse the membrane as a helical segment. Residues 204–383 (IRLFPQMRDM…WEKSYFEFRK (180 aa)) are Cytoplasmic-facing. Residues 384 to 404 (SLLSLAVSLGGVISGEHGIGA) form a helical membrane-spanning segment. Residues 405–443 (VKLSELEELFPEQFELMRQIKLLFDPKNILNPGKVVRKL) lie on the Extracellular side of the membrane.

It belongs to the FAD-binding oxidoreductase/transferase type 4 family. It depends on FAD as a cofactor. Requires Zn(2+) as cofactor.

The protein localises to the cell membrane. The enzyme catalyses (R)-lactate + A = pyruvate + AH2. Its function is as follows. Catalyzes the dehydrogenation of (R)-lactate (D-lactate) to pyruvate. Is likely involved in the utilization of D-lactate as a sole source for both carbon and electrons for dissimilatory sulfate reduction. Cannot use L-lactate as substrate, and NAD(+), horse cytochrome c, methylene blue or dimethylnaphthoquinone as acceptors. Active in vitro with artificial electron acceptors such as 2,6-dichlorophenolindophenol (DCPIP); the physiological acceptor is not known, but potential acceptors include cytochromes or quinones. This is D-lactate dehydrogenase from Archaeoglobus fulgidus (strain ATCC 49558 / DSM 4304 / JCM 9628 / NBRC 100126 / VC-16).